A 103-amino-acid polypeptide reads, in one-letter code: Co-chaperonin GroES (103 aa).

This sequence belongs to the GroES chaperonin family. As to quaternary structure, heptamer of 7 subunits arranged in a ring. Interacts with the chaperonin GroEL.

The protein resides in the cytoplasm. Functionally, together with the chaperonin GroEL, plays an essential role in assisting protein folding. The GroEL-GroES system forms a nano-cage that allows encapsulation of the non-native substrate proteins and provides a physical environment optimized to promote and accelerate protein folding. GroES binds to the apical surface of the GroEL ring, thereby capping the opening of the GroEL channel. In Dinoroseobacter shibae (strain DSM 16493 / NCIMB 14021 / DFL 12), this protein is Co-chaperonin GroES.